A 475-amino-acid polypeptide reads, in one-letter code: Glycogen synthase (475 aa).

Lysine 15 provides a ligand contact to ADP-alpha-D-glucose.

This sequence belongs to the glycosyltransferase 1 family. Bacterial/plant glycogen synthase subfamily.

It carries out the reaction [(1-&gt;4)-alpha-D-glucosyl](n) + ADP-alpha-D-glucose = [(1-&gt;4)-alpha-D-glucosyl](n+1) + ADP + H(+). Its pathway is glycan biosynthesis; glycogen biosynthesis. Functionally, synthesizes alpha-1,4-glucan chains using ADP-glucose. This Alkaliphilus metalliredigens (strain QYMF) protein is Glycogen synthase.